The primary structure comprises 617 residues: MDSDFGIPRELSPLQQLRSQYHPELPPCLQGTTVRVELGDGTTVAKAGDAHIIARAFPHTLGQPLAHFLRATAKVADAQIITEHPVKRVGIVFCGRQAPGGHNVVWGLYEALKVHNAKNTLLGFLGGSEGLFAQKTLEITDEVLQTYKNQGGYDMLGRTKDQIRTTEQVNAALKACTDLKLDSLVIIGGVTSNTDAAHLAEFFAEAKCSTKVVGVPVTINGDLKNQFVEANVGFDTTCKVNSQLISNICTDALSAEKYYYFVRLMGRKHSHVALECTLQSHPNMVILGEEVTASKLTIFDIIKQICDAVQARAEQDKNHGVILIPEGLVESIPELYALLKEIHGLLKEGVQVDNISTQLSSWSSALFEFLPPFIKKQLLLHPESDDSAQLSQIETEKLLAYLVETEMNKRLKEGTYKGKKFNAICHFFGYQARGSLPSKFDCDYAYVLGHVCYHILAAGLNGYMATVTNLKSPVNKWKCGAAPISAMMTVKRWSQNSGSTTIGRPVIHPASVDLKGKAYDLLRQNAQKFLMEDMYRNPGPVQYDGPGADAKAVSLCVEDQDYMGKIKKLQEYLDQVRTIVKPGCSQDVLKAALSVMASVTDVLTTISSSSTSGQQFA.

The protein belongs to the phosphofructokinase type A (PFKA) family. PPi-dependent PFK group II subfamily. Clade 'Long' sub-subfamily. As to quaternary structure, tetramer of two alpha (regulatory) and two beta (catalytic) chains. As to expression, expressed in roots and specific parts such as the trichomes of leaves, cotyledon veins, as well as in stamen and gynoecium of flowers.

It is found in the cytoplasm. The protein operates within carbohydrate degradation; glycolysis; D-glyceraldehyde 3-phosphate and glycerone phosphate from D-glucose: step 3/4. Allosterically activated by fructose 2,6-bisphosphate. In terms of biological role, regulatory subunit of pyrophosphate--fructose 6-phosphate 1-phosphotransferase. The protein is Pyrophosphate--fructose 6-phosphate 1-phosphotransferase subunit alpha 2 of Arabidopsis thaliana (Mouse-ear cress).